The sequence spans 183 residues: Interleukin-24 (183 aa).

The first 28 residues, 1-28, serve as a signal peptide directing secretion; sequence MQTSLRQQILPGLSLILLVLNQVPELQG. Cys36 and Cys83 are disulfide-bonded. Asn76 is a glycosylation site (N-linked (GlcNAc...) asparagine). A Glycyl lysine isopeptide (Lys-Gly) (interchain with G-Cter in ubiquitin) cross-link involves residue Lys99.

It belongs to the IL-10 family. In terms of processing, glycosylated. Post-translationally, ubiquitination at Lys-99 promotes proteasomal degradation.

It is found in the secreted. Functionally, multifunctional cytokine mainly produced by T-cells that plays a regulatory role in immune response, tissue homeostasis, host defense, and oncogenesis. Possesses antiviral functions and induces the type I interferon response during influenza infection. Signals through two receptor complexes IL20RA/IL20RB or IL20RB/IL22RA1. In turn, stimulates the JAK1-STAT3 and MAPK pathways and promotes the secretion of pro-inflammatory mediators including IL8 and MMP1. Intracellularly, maintains endoplasmic reticulum homeostasis by restricting the eIF2alpha-CHOP pathway-mediated stress signal. In addition, acts as a quality control mechanism for the ubiquitin proteasome system by alerting the cell to proteasome dysfunction through activation of PKR/EIF2AK2. The sequence is that of Interleukin-24 (Il24) from Rattus norvegicus (Rat).